We begin with the raw amino-acid sequence, 398 residues long: Keratinocyte differentiation factor 1 (398 aa).

2 disordered regions span residues 1-60 (MPRP…SITF) and 123-156 (AEAN…STMG). Residues 44–55 (RPDPKDPGHHGP) show a composition bias toward basic and acidic residues. Phosphoserine is present on S218. 2 disordered regions span residues 307 to 340 (RKSR…TMVG) and 369 to 392 (GAPG…SGAP). Over residues 377 to 389 (HDSSFQGTDTDSS) the composition is skewed to polar residues.

The protein localises to the cytoplasm. It localises to the cell junction. In terms of biological role, plays a role in the regulation of the epidermis formation during early development. Required both as an inhibitor of basal cell proliferation and a promoter of differentiation of basal progenitor cell progeny. The chain is Keratinocyte differentiation factor 1 (KDF1) from Homo sapiens (Human).